Here is a 417-residue protein sequence, read N- to C-terminus: Serine hydroxymethyltransferase (417 aa).

(6S)-5,6,7,8-tetrahydrofolate-binding positions include leucine 119 and 123–125; that span reads GHL. Lysine 227 carries the N6-(pyridoxal phosphate)lysine modification.

This sequence belongs to the SHMT family. As to quaternary structure, homodimer. Pyridoxal 5'-phosphate is required as a cofactor.

It is found in the cytoplasm. The catalysed reaction is (6R)-5,10-methylene-5,6,7,8-tetrahydrofolate + glycine + H2O = (6S)-5,6,7,8-tetrahydrofolate + L-serine. The protein operates within one-carbon metabolism; tetrahydrofolate interconversion. It participates in amino-acid biosynthesis; glycine biosynthesis; glycine from L-serine: step 1/1. In terms of biological role, catalyzes the reversible interconversion of serine and glycine with tetrahydrofolate (THF) serving as the one-carbon carrier. This reaction serves as the major source of one-carbon groups required for the biosynthesis of purines, thymidylate, methionine, and other important biomolecules. Also exhibits THF-independent aldolase activity toward beta-hydroxyamino acids, producing glycine and aldehydes, via a retro-aldol mechanism. The protein is Serine hydroxymethyltransferase of Buchnera aphidicola subsp. Cinara cedri (strain Cc).